An 852-amino-acid chain; its full sequence is Translation initiation factor IF-2 (852 aa).

The disordered stretch occupies residues 1-240 (MEDKNKTIKE…KTSSDKRDFS (240 aa)). Residues 78–90 (KEVKYEESSRKQD) are compositionally biased toward basic and acidic residues. A compositionally biased stretch (polar residues) spans 106–120 (VRPSGDSSYPVSRSP). Gly residues predominate over residues 150 to 200 (RGPGQGGGYQGNRGPGQGGGYQGNRGPGQQTGPGNRFGGSGPGNRSGGPGG). A compositionally biased stretch (basic and acidic residues) spans 227-240 (HDKEKTSSDKRDFS). The region spanning 347 to 516 (NRPPVVTIMG…LLQAEVMDLK (170 aa)) is the tr-type G domain. The segment at 356–363 (GHVDHGKT) is G1. 356–363 (GHVDHGKT) is a GTP binding site. A G2 region spans residues 381–385 (GITQH). The interval 402 to 405 (DTPG) is G3. Residues 402 to 406 (DTPGH) and 456 to 459 (NKID) each bind GTP. Residues 456–459 (NKID) form a G4 region. Residues 492–494 (SAR) form a G5 region.

The protein belongs to the TRAFAC class translation factor GTPase superfamily. Classic translation factor GTPase family. IF-2 subfamily.

The protein resides in the cytoplasm. In terms of biological role, one of the essential components for the initiation of protein synthesis. Protects formylmethionyl-tRNA from spontaneous hydrolysis and promotes its binding to the 30S ribosomal subunits. Also involved in the hydrolysis of GTP during the formation of the 70S ribosomal complex. This Leptospira borgpetersenii serovar Hardjo-bovis (strain JB197) protein is Translation initiation factor IF-2.